Here is a 185-residue protein sequence, read N- to C-terminus: Small ribosomal subunit protein uS5 (185 aa).

Residues L29–I92 enclose the S5 DRBM domain.

The protein belongs to the universal ribosomal protein uS5 family. As to quaternary structure, part of the 30S ribosomal subunit. Contacts proteins S4 and S8.

Its function is as follows. With S4 and S12 plays an important role in translational accuracy. Functionally, located at the back of the 30S subunit body where it stabilizes the conformation of the head with respect to the body. The chain is Small ribosomal subunit protein uS5 from Aster yellows witches'-broom phytoplasma (strain AYWB).